A 469-amino-acid chain; its full sequence is 3-isopropylmalate dehydratase large subunit (469 aa).

Positions 347, 408, and 411 each coordinate [4Fe-4S] cluster.

The protein belongs to the aconitase/IPM isomerase family. LeuC type 1 subfamily. In terms of assembly, heterodimer of LeuC and LeuD. [4Fe-4S] cluster serves as cofactor.

The catalysed reaction is (2R,3S)-3-isopropylmalate = (2S)-2-isopropylmalate. Its pathway is amino-acid biosynthesis; L-leucine biosynthesis; L-leucine from 3-methyl-2-oxobutanoate: step 2/4. In terms of biological role, catalyzes the isomerization between 2-isopropylmalate and 3-isopropylmalate, via the formation of 2-isopropylmaleate. The protein is 3-isopropylmalate dehydratase large subunit of Haemophilus influenzae (strain ATCC 51907 / DSM 11121 / KW20 / Rd).